Consider the following 550-residue polypeptide: Chaperonin GroEL (550 aa).

ATP contacts are provided by residues 30-33, Lys51, 87-91, Gly415, 479-481, and Asp495; these read TLGP, DGTTT, and NAA.

The protein belongs to the chaperonin (HSP60) family. In terms of assembly, forms a cylinder of 14 subunits composed of two heptameric rings stacked back-to-back. Interacts with the co-chaperonin GroES.

It localises to the cytoplasm. The catalysed reaction is ATP + H2O + a folded polypeptide = ADP + phosphate + an unfolded polypeptide.. Functionally, together with its co-chaperonin GroES, plays an essential role in assisting protein folding. The GroEL-GroES system forms a nano-cage that allows encapsulation of the non-native substrate proteins and provides a physical environment optimized to promote and accelerate protein folding. The chain is Chaperonin GroEL from Burkholderia mallei (strain NCTC 10247).